The sequence spans 292 residues: G1/S-specific cyclin-D3 (292 aa).

In terms of domain architecture, Cyclin N-terminal spans 27-152 (VLQSLLRLEE…LVLGKLKWDL (126 aa)). A disordered region spans residues 256–292 (REAAQTAPSPVPKAPRGSSSQGPSQTSTPTDVTAIHL). Phosphoserine is present on residues S264 and S279. Over residues 272–285 (GSSSQGPSQTSTPT) the composition is skewed to low complexity. T283 is modified (phosphothreonine).

Belongs to the cyclin family. Cyclin D subfamily. In terms of assembly, interacts with the CDK4 and CDK6 protein kinases to form a serine/threonine kinase holoenzyme complex. The cyclin subunit imparts substrate specificity to the complex. Interacts with ATF5. Interacts with EIF3K. Component of the ternary complex cyclin D/CDK4/CDKN1B required for nuclear translocation and modulation of CDK4-mediated kinase activity. Can form similar complexes with either CDKN1A or CDKN2A. Post-translationally, phosphorylation at Thr-283 by MAP kinases is required for ubiquitination and degradation by the DCX(AMBRA1) complex. Ubiquitinated by the DCX(AMBRA1) complex during the transition from G1 to S cell phase, leading to its degradation: ubiquitination is dependent on Thr-283 phosphorylation. The DCX(AMBRA1) complex represents the major regulator of CCND3 stability during the G1/S transition. Polyubiquitinated by the SCF(FBXL2) complex, leading to proteasomal degradation.

Its subcellular location is the nucleus. It is found in the cytoplasm. Regulatory component of the cyclin D3-CDK4 (DC) complex that phosphorylates and inhibits members of the retinoblastoma (RB) protein family including RB1 and regulates the cell-cycle during G(1)/S transition. Phosphorylation of RB1 allows dissociation of the transcription factor E2F from the RB/E2F complex and the subsequent transcription of E2F target genes which are responsible for the progression through the G(1) phase. Hypophosphorylates RB1 in early G(1) phase. Cyclin D-CDK4 complexes are major integrators of various mitogenenic and antimitogenic signals. Component of the ternary complex, cyclin D3/CDK4/CDKN1B, required for nuclear translocation and activity of the cyclin D-CDK4 complex. Shows transcriptional coactivator activity with ATF5 independently of CDK4. This is G1/S-specific cyclin-D3 from Mus musculus (Mouse).